The primary structure comprises 498 residues: Na(+)/H(+) exchange regulatory cofactor NHE-RF4 (498 aa).

PDZ domains lie at 49–130, 157–235, 263–346, and 394–475; these read FCLL…LAQH, LCHV…AGLE, CLNI…VDPE, and QCFL…GARN. Ser329 is modified (phosphoserine).

As to quaternary structure, interacts with the C-terminal region of GUCY2C. Interacts with C-terminal region of SLC9A3 and the interactions decrease in response to elevated calcium ion levels. Interacts with the C-terminal region of SLC34A1. Interacts with USP2 isoform 2. Interacts (via the third PDZ domain) with SLC26A3 (via PDZ-binding motif). This interaction leads to decreased expression of SLC26A3 on the cell membrane resulting in its reduced exchanger activity. Post-translationally, phosphorylation at Ser-329 negatively regulates its interaction with SLC26A3. As to expression, expressed in kidney and small intestine. Not detected in heart, brain, spleen, lung, liver, skeletal muscle or testis.

It localises to the cell membrane. The protein resides in the cytoplasm. Its function is as follows. Acts as a regulatory protein that associates with GUCY2C and negatively modulates its heat-stable enterotoxin-mediated activation. Stimulates SLC9A3 activity in the presence of elevated calcium ions. This is Na(+)/H(+) exchange regulatory cofactor NHE-RF4 (Nherf4) from Mus musculus (Mouse).